Reading from the N-terminus, the 218-residue chain is Nuclear cap-binding protein subunit 2 (218 aa).

MRNA-binding positions include tyrosine 24, tyrosine 49, 118-122 (TIDLD), 129-133 (RQFGR), and 139-140 (QV). One can recognise an RRM domain in the interval 46–124 (ATIYVGNLSF…REITIDLDPG (79 aa)). The span at 176 to 194 (DPHKNHHHHHHGHHHHHGQ) shows a compositional bias: basic residues. The interval 176-200 (DPHKNHHHHHHGHHHHHGQPHAAAA) is disordered.

It belongs to the RRM NCBP2 family. As to quaternary structure, component of the nuclear cap-binding complex (CBC).

The protein localises to the nucleus. Functionally, component of the cap-binding complex (CBC) involved in the nuclear export of capped U snRNAs. The CBC complex is required for efficient pre-mRNA splicing through efficient commitment complex and spliceosome formation; and involved in rRNA processing at sites A0, A1 and A2. In Eremothecium gossypii (strain ATCC 10895 / CBS 109.51 / FGSC 9923 / NRRL Y-1056) (Yeast), this protein is Nuclear cap-binding protein subunit 2 (CBC2).